A 137-amino-acid polypeptide reads, in one-letter code: MSIIKEFREFAMRGNVVDLAVGVIIGALFGKIVSSLVSDIIMPPLGLLIGGVDFKQFALFLRNAQGGIPAVVMNYGAFIQNIFDFIIVAFAIFIAIKLMNKMRCKQEDTPAAPPKPSAEEKLLAEIRDLLKEQQTRQ.

Over Met-1–Val-16 the chain is Cytoplasmic. The chain crosses the membrane as a helical span at residues Val-17–Leu-45. At Gly-46 to Asn-74 the chain is on the periplasmic side. The helical transmembrane segment at Tyr-75–Ile-94 threads the bilayer. Over Ala-95 to Gln-137 the chain is Cytoplasmic.

It belongs to the MscL family. As to quaternary structure, homopentamer.

It is found in the cell inner membrane. In terms of biological role, channel that opens in response to stretch forces in the membrane lipid bilayer. Forms a nonselective ion channel with a conductance of about 4 nanosiemens. May participate in the regulation of osmotic pressure changes within the cell. The protein is Large-conductance mechanosensitive channel of Pectobacterium carotovorum (Erwinia carotovora).